The primary structure comprises 500 residues: Arabinofuranosidase/B-xylosidase (500 aa).

An N-terminal signal peptide occupies residues 1–21 (MLSNARIIAAGCIAAGSLVAA). Asn-467 carries an N-linked (GlcNAc...) asparagine glycan.

The protein belongs to the glycosyl hydrolase 54 family.

It catalyses the reaction Hydrolysis of terminal non-reducing alpha-L-arabinofuranoside residues in alpha-L-arabinosides.. It carries out the reaction Hydrolysis of (1-&gt;4)-beta-D-xylans, to remove successive D-xylose residues from the non-reducing termini.. The polypeptide is Arabinofuranosidase/B-xylosidase (xyl1) (Trichoderma koningii (Hypocrea koningii)).